The following is a 447-amino-acid chain: Tubulin beta-1 chain (447 aa).

Residues Q11, E69, S138, G142, T143, G144, N204, and N226 each coordinate GTP. E69 contributes to the Mg(2+) binding site.

This sequence belongs to the tubulin family. Dimer of alpha and beta chains. A typical microtubule is a hollow water-filled tube with an outer diameter of 25 nm and an inner diameter of 15 nM. Alpha-beta heterodimers associate head-to-tail to form protofilaments running lengthwise along the microtubule wall with the beta-tubulin subunit facing the microtubule plus end conferring a structural polarity. Microtubules usually have 13 protofilaments but different protofilament numbers can be found in some organisms and specialized cells. Mg(2+) is required as a cofactor.

The protein resides in the cytoplasm. The protein localises to the cytoskeleton. Its function is as follows. Tubulin is the major constituent of microtubules, a cylinder consisting of laterally associated linear protofilaments composed of alpha- and beta-tubulin heterodimers. Microtubules grow by the addition of GTP-tubulin dimers to the microtubule end, where a stabilizing cap forms. Below the cap, tubulin dimers are in GDP-bound state, owing to GTPase activity of alpha-tubulin. The polypeptide is Tubulin beta-1 chain (benA) (Emericella nidulans (strain FGSC A4 / ATCC 38163 / CBS 112.46 / NRRL 194 / M139) (Aspergillus nidulans)).